The primary structure comprises 368 residues: Probable dual-specificity RNA methyltransferase RlmN (368 aa).

The active-site Proton acceptor is glutamate 111. Positions tyrosine 117 to glutamate 355 constitute a Radical SAM core domain. Cysteine 124 and cysteine 360 are disulfide-bonded. [4Fe-4S] cluster contacts are provided by cysteine 131, cysteine 135, and cysteine 138. S-adenosyl-L-methionine contacts are provided by residues glycine 181–glutamate 182, serine 215, serine 238–histidine 240, and asparagine 317. Cysteine 360 (S-methylcysteine intermediate) is an active-site residue.

It belongs to the radical SAM superfamily. RlmN family. [4Fe-4S] cluster serves as cofactor.

It localises to the cytoplasm. It catalyses the reaction adenosine(2503) in 23S rRNA + 2 reduced [2Fe-2S]-[ferredoxin] + 2 S-adenosyl-L-methionine = 2-methyladenosine(2503) in 23S rRNA + 5'-deoxyadenosine + L-methionine + 2 oxidized [2Fe-2S]-[ferredoxin] + S-adenosyl-L-homocysteine. The enzyme catalyses adenosine(37) in tRNA + 2 reduced [2Fe-2S]-[ferredoxin] + 2 S-adenosyl-L-methionine = 2-methyladenosine(37) in tRNA + 5'-deoxyadenosine + L-methionine + 2 oxidized [2Fe-2S]-[ferredoxin] + S-adenosyl-L-homocysteine. Its function is as follows. Specifically methylates position 2 of adenine 2503 in 23S rRNA and position 2 of adenine 37 in tRNAs. The chain is Probable dual-specificity RNA methyltransferase RlmN from Corynebacterium diphtheriae (strain ATCC 700971 / NCTC 13129 / Biotype gravis).